We begin with the raw amino-acid sequence, 326 residues long: o-succinylbenzoate synthase (326 aa).

The active-site Proton donor is the K110. Mg(2+)-binding residues include D138, E165, and D188. K212 serves as the catalytic Proton acceptor.

Belongs to the mandelate racemase/muconate lactonizing enzyme family. MenC type 1 subfamily. The cofactor is a divalent metal cation.

The enzyme catalyses (1R,6R)-6-hydroxy-2-succinyl-cyclohexa-2,4-diene-1-carboxylate = 2-succinylbenzoate + H2O. It participates in quinol/quinone metabolism; 1,4-dihydroxy-2-naphthoate biosynthesis; 1,4-dihydroxy-2-naphthoate from chorismate: step 4/7. The protein operates within quinol/quinone metabolism; menaquinone biosynthesis. Functionally, converts 2-succinyl-6-hydroxy-2,4-cyclohexadiene-1-carboxylate (SHCHC) to 2-succinylbenzoate (OSB). The chain is o-succinylbenzoate synthase from Mycobacterium bovis (strain ATCC BAA-935 / AF2122/97).